The chain runs to 322 residues: Ferrochelatase (322 aa).

Residues histidine 194 and glutamate 275 each contribute to the Fe cation site.

The protein belongs to the ferrochelatase family.

It localises to the cytoplasm. It catalyses the reaction heme b + 2 H(+) = protoporphyrin IX + Fe(2+). Its pathway is porphyrin-containing compound metabolism; protoheme biosynthesis; protoheme from protoporphyrin-IX: step 1/1. Catalyzes the ferrous insertion into protoporphyrin IX. The polypeptide is Ferrochelatase (Proteus mirabilis (strain HI4320)).